The primary structure comprises 2555 residues: Plipastatin synthase subunit C (2555 aa).

Positions 7 to 306 (IQDIYPLSFM…NTIPIRAQSD (300 aa)) are condensation 1. Residues 491 to 894 (TYAELDMYAS…SIEGVREAAV (404 aa)) are adenylation 1. The Carrier 1 domain maps to 967-1042 (APRNVTEMKL…GLATVIREGT (76 aa)). S1002 carries the O-(pantetheine 4'-phosphoryl)serine modification. A condensation 2 region spans residues 1054–1344 (KQETYPVSSA…NTLALRTRPE (291 aa)). The tract at residues 1532–1927 (TYEDLNSWAN…QIDGVKEAAV (396 aa)) is adenylation 2. The Carrier 2 domain maps to 2003–2077 (PPRNELEEQL…DLSPFIRKSE (75 aa)). An O-(pantetheine 4'-phosphoryl)serine modification is found at S2038. The interval 2085 to 2548 (IQGDVPWTPV…SLTAEDLDSI (464 aa)) is epimerization 3.

It belongs to the ATP-dependent AMP-binding enzyme family. Pantetheine 4'-phosphate is required as a cofactor.

Its function is as follows. This protein is a multifunctional enzyme, able to activate and polymerize the amino acids Glu and Ala/Val as part of the biosynthesis of the lipopeptide antibiotic plipastatin. The Ala/Val residue is further epimerized to the D-isomer form. The activation sites for these amino acids consist of individual domains. This chain is Plipastatin synthase subunit C (ppsC), found in Bacillus subtilis (strain 168).